We begin with the raw amino-acid sequence, 147 residues long: uncharacterized protein (147 aa).

Residues 44 to 147 (LVGYIDKEIH…LKSIKERLSI (104 aa)) form the HTH LytTR-type domain.

It localises to the cytoplasm. This is an uncharacterized protein from Staphylococcus aureus (strain MRSA252).